An 801-amino-acid chain; its full sequence is U-box domain-containing protein 34 (801 aa).

Positions 205-309 (RSPTLPDPRQ…PETSRKSKKV (105 aa)) are disordered. Residues 236–254 (LTCNKPKTPQSSKASSATT) are compositionally biased toward polar residues. Residues 289–309 (VSEHRDSDRSPPETSRKSKKV) are compositionally biased toward basic and acidic residues. The stretch at 301–395 (ETSRKSKKVE…ETAKALLARE (95 aa)) forms a coiled coil. A Protein kinase domain is found at 442–705 (FSPEKVIGEG…DLKSEVIPVL (264 aa)). ATP is bound by residues 448–456 (IGEGGYGKV) and K469. D564 functions as the Proton acceptor in the catalytic mechanism. The U-box domain occupies 724–797 (RAPSHYFCPI…RDWKSRVRFS (74 aa)).

Belongs to the protein kinase superfamily. Ser/Thr protein kinase family.

The enzyme catalyses L-seryl-[protein] + ATP = O-phospho-L-seryl-[protein] + ADP + H(+). It catalyses the reaction L-threonyl-[protein] + ATP = O-phospho-L-threonyl-[protein] + ADP + H(+). The catalysed reaction is S-ubiquitinyl-[E2 ubiquitin-conjugating enzyme]-L-cysteine + [acceptor protein]-L-lysine = [E2 ubiquitin-conjugating enzyme]-L-cysteine + N(6)-ubiquitinyl-[acceptor protein]-L-lysine.. Its pathway is protein modification; protein ubiquitination. Functionally, functions as an E3 ubiquitin ligase. This Arabidopsis thaliana (Mouse-ear cress) protein is U-box domain-containing protein 34 (PUB34).